The chain runs to 186 residues: Nuclear transcription factor Y subunit B-1 (186 aa).

The tract at residues 1–24 (MAGNKKRGGRNMDQVKKAAVRSDG) is disordered. The DNA-binding element occupies 34–40 (LPMANLV). The interval 61-72 (THDCAVEFVGFV) is subunit association domain (SAD). The interval 123-142 (GGNRRVAPPPPAAATPLTPG) is disordered.

It belongs to the NFYB/HAP3 subunit family. In terms of assembly, heterotrimeric transcription factor composed of three components, NF-YA, NF-YB and NF-YC. NF-YB and NF-YC must interact and dimerize for NF-YA association and DNA binding. Interacts with MADS18. Forms a ternary complex with the MADS6-MADS18 heterodimer. In terms of tissue distribution, expressed in developing kernels.

It is found in the nucleus. Functionally, component of the NF-Y/HAP transcription factor complex. The NF-Y complex stimulates the transcription of various genes by recognizing and binding to a CCAAT motif in promoters. May act through association with MADS-box proteins. May regulate the expression of genes involved in flowering. The polypeptide is Nuclear transcription factor Y subunit B-1 (NFYB1) (Oryza sativa subsp. japonica (Rice)).